A 297-amino-acid polypeptide reads, in one-letter code: Homoserine kinase (297 aa).

Residue 82–92 coordinates ATP; that stretch reads PLTRGLGSSAS.

It belongs to the GHMP kinase family. Homoserine kinase subfamily.

Its subcellular location is the cytoplasm. The catalysed reaction is L-homoserine + ATP = O-phospho-L-homoserine + ADP + H(+). The protein operates within amino-acid biosynthesis; L-threonine biosynthesis; L-threonine from L-aspartate: step 4/5. In terms of biological role, catalyzes the ATP-dependent phosphorylation of L-homoserine to L-homoserine phosphate. This Bacillus thuringiensis subsp. konkukian (strain 97-27) protein is Homoserine kinase.